Here is a 350-residue protein sequence, read N- to C-terminus: UDP-3-O-acylglucosamine N-acyltransferase (350 aa).

Histidine 244 acts as the Proton acceptor in catalysis.

It belongs to the transferase hexapeptide repeat family. LpxD subfamily. Homotrimer.

It carries out the reaction a UDP-3-O-[(3R)-3-hydroxyacyl]-alpha-D-glucosamine + a (3R)-hydroxyacyl-[ACP] = a UDP-2-N,3-O-bis[(3R)-3-hydroxyacyl]-alpha-D-glucosamine + holo-[ACP] + H(+). The protein operates within bacterial outer membrane biogenesis; LPS lipid A biosynthesis. Functionally, catalyzes the N-acylation of UDP-3-O-acylglucosamine using 3-hydroxyacyl-ACP as the acyl donor. Is involved in the biosynthesis of lipid A, a phosphorylated glycolipid that anchors the lipopolysaccharide to the outer membrane of the cell. In Janthinobacterium sp. (strain Marseille) (Minibacterium massiliensis), this protein is UDP-3-O-acylglucosamine N-acyltransferase.